A 194-amino-acid polypeptide reads, in one-letter code: Mediator of RNA polymerase II transcription subunit 8 (194 aa).

Belongs to the Mediator complex subunit 8 family. As to quaternary structure, component of the Mediator complex.

Its subcellular location is the nucleus. Functionally, component of the Mediator complex, a coactivator involved in the regulated transcription of nearly all RNA polymerase II-dependent genes. Mediator functions as a bridge to convey information from gene-specific regulatory proteins to the basal RNA polymerase II transcription machinery. Mediator is recruited to promoters by direct interactions with regulatory proteins and serves as a scaffold for the assembly of a functional preinitiation complex with RNA polymerase II and the general transcription factors. This chain is Mediator of RNA polymerase II transcription subunit 8 (MED8), found in Yarrowia lipolytica (strain CLIB 122 / E 150) (Yeast).